The sequence spans 472 residues: 4-aminobutyrate aminotransferase (472 aa).

135-136 contributes to the pyridoxal 5'-phosphate binding site; it reads GA. A substrate-binding site is contributed by R193. K327 is modified (N6-(pyridoxal phosphate)lysine). T352 lines the pyridoxal 5'-phosphate pocket.

This sequence belongs to the class-III pyridoxal-phosphate-dependent aminotransferase family. As to quaternary structure, homodimer and homotetramer. Pyridoxal 5'-phosphate serves as cofactor.

It localises to the cytoplasm. It carries out the reaction 4-aminobutanoate + 2-oxoglutarate = succinate semialdehyde + L-glutamate. It participates in amino-acid degradation; L-arginine degradation. Its function is as follows. Required for the degradation of gamma-aminobutyric acid (GABA), which is important for utilization of GABA as nitrogen source and for oxidative stress tolerance. Deaminates GABA to succinate semialdehyde, which in turn is converted to succinate by the succinate-semialdehyde dehydrogenase UGA2. May be involved in an alternative, arginase-independent arginine degradation pathway via GABA. The chain is 4-aminobutyrate aminotransferase from Kluyveromyces lactis (strain ATCC 8585 / CBS 2359 / DSM 70799 / NBRC 1267 / NRRL Y-1140 / WM37) (Yeast).